A 265-amino-acid chain; its full sequence is Capsule polysaccharide export inner-membrane protein CtrC (265 aa).

The next 6 helical transmembrane spans lie at 37-57 (IGFL…VLMW), 67-84 (TLNI…LMMW), 121-141 (IAGA…IGWI), 148-168 (FYML…GLVI), 178-198 (FGKI…AFFF), and 238-258 (WYIV…VSKF). The 222-residue stretch at 37–258 (IGFLWLFVEP…LFGLAMVSKF (222 aa)) folds into the ABC transmembrane type-2 domain.

It belongs to the ABC-2 integral membrane protein family.

Its subcellular location is the cell inner membrane. Its function is as follows. May form an ATP-driven capsule polysaccharide export apparatus, in association with the CtrB and CtrD proteins. The polypeptide is Capsule polysaccharide export inner-membrane protein CtrC (ctrC) (Neisseria meningitidis serogroup B (strain ATCC BAA-335 / MC58)).